A 515-amino-acid chain; its full sequence is ATP-dependent rRNA helicase rrp-3 (515 aa).

A disordered region spans residues 1 to 85; the sequence is MSTKRRKTSD…LDVAPEQEEV (85 aa). Residues 15–24 are compositionally biased toward low complexity; sequence LKKAAAPSAP. Positions 25-55 are enriched in basic and acidic residues; the sequence is ELKKEKKVKDKSTKDKSSTKKTEKTEKKQDA. A compositionally biased stretch (acidic residues) spans 69–85; it reads TEEDSVTLDVAPEQEEV. The short motif at 90–118 is the Q motif element; that stretch reads KTFKDLGIVDALCEACERLGYKNPTPIQE. The region spanning 121-292 is the Helicase ATP-binding domain; that stretch reads IPLALQNRDI…RASLRDPLKV (172 aa). An ATP-binding site is contributed by 134 to 141; sequence AETGSGKT. A DEAD box motif is present at residues 240-243; it reads DEAD. The Helicase C-terminal domain maps to 316–464; it reads HKDTYLVYLC…EYPLEKDEVM (149 aa). Residues 482–515 form a disordered region; the sequence is KSLMENQGKHGGLLKRKRGNGQGGGRDHMDAEEG. Basic and acidic residues predominate over residues 506–515; that stretch reads GRDHMDAEEG.

Belongs to the DEAD box helicase family. DDX47/RRP3 subfamily.

It localises to the nucleus. Required for pre-ribosomal RNA processing. Involved in the maturation of the 35S-pre-rRNA and to its cleavage to mature 18S rRNA. This is ATP-dependent rRNA helicase rrp-3 (rrp-3) from Neurospora crassa (strain ATCC 24698 / 74-OR23-1A / CBS 708.71 / DSM 1257 / FGSC 987).